Reading from the N-terminus, the 56-residue chain is Lantibiotic subtilin (56 aa).

The propeptide occupies 1–24 (MSKFDDFDLDVVKVSKQDSKITPQ). Trp-25 bears the N2-succinyltryptophan; partial mark. Residues 27 to 31 (SESLC) constitute a cross-link (lanthionine (Ser-Cys)). The residue at position 29 (Ser-29) is a 2,3-didehydroalanine (Ser). 4 cross-links (beta-methyllanthionine (Thr-Cys)) span residues 32–35 (TPGC), 37–43 (TGALQTC), 47–50 (TLTC), and 49–52 (TCNC). Thr-42 carries the (Z)-2,3-didehydrobutyrine modification. Ser-55 is modified (2,3-didehydroalanine (Ser)).

It belongs to the type A lantibiotic family. Post-translationally, maturation of lantibiotics involves the enzymatic conversion of Thr, and Ser into dehydrated AA and the formation of thioether bonds with cysteine. This is followed by membrane translocation and cleavage of the modified precursor. Succinylated subtilin is 10-20 times less active than subtilin. The ratio subtilin/succinylated subtilin is about 1:2 after 24 hours growth. In terms of processing, the 2,3-didehydrobutyrine is determined to be the Z-isomer.

Its function is as follows. Lanthionine-containing peptide antibiotic (lantibiotic) active on Gram-positive bacteria. The bactericidal activity of lantibiotics is based on depolarization of energized bacterial cytoplasmic membranes, initiated by the formation of aqueous transmembrane pores. This Bacillus subtilis protein is Lantibiotic subtilin (spaS).